Reading from the N-terminus, the 231-residue chain is MSEIKDVIVQGLWKNNSALVQLLGLCPLLAVTSTATNALGLGLATTLVLTLTNLTISTLRHWTPAEIRIPIYVMIIASVVSAVQMLINAYAFGLYQSLGIFIPLIVTNCIVVGRAEAFAAKKGPALSALDGFSIGMGATCAMFVLGSLREIIGNGTLFDGADALLGSWAKVLRLEIFHTDSPFLLAMLPPSAFIGLGLMLAGKYLIDERMKKRRAEAAAERALPNGETGNV.

6 helical membrane-spanning segments follow: residues Ala-18–Ala-38, Leu-39–Leu-59, Thr-63–Val-83, Leu-86–Val-106, Ala-125–Leu-145, and Pro-182–Gly-202.

It belongs to the NqrDE/RnfAE family. As to quaternary structure, the complex is composed of six subunits: RsxA, RsxB, RsxC, RsxD, RsxE and RsxG.

The protein resides in the cell inner membrane. In terms of biological role, part of a membrane-bound complex that couples electron transfer with translocation of ions across the membrane. Required to maintain the reduced state of SoxR. The protein is Ion-translocating oxidoreductase complex subunit E of Escherichia coli O7:K1 (strain IAI39 / ExPEC).